We begin with the raw amino-acid sequence, 1098 residues long: Protein translocase subunit SecA (1098 aa).

Residues Q176, 194-198 (GEGKT), and D696 contribute to the ATP site. The interval 1024-1098 (EPEQVREAAP…KYKNCHGQNA (75 aa)) is disordered. Basic and acidic residues-rich tracts occupy residues 1041 to 1051 (QYREEKQDLSD) and 1058 to 1077 (AEHDTREVKREPVRAEKTVG). Zn(2+) is bound by residues C1082, C1084, C1093, and H1094.

This sequence belongs to the SecA family. As to quaternary structure, monomer and homodimer. Part of the essential Sec protein translocation apparatus which comprises SecA, SecYEG and auxiliary proteins SecDF. Other proteins may also be involved. Zn(2+) is required as a cofactor.

It localises to the cell inner membrane. The protein localises to the cytoplasm. It carries out the reaction ATP + H2O + cellular proteinSide 1 = ADP + phosphate + cellular proteinSide 2.. Functionally, part of the Sec protein translocase complex. Interacts with the SecYEG preprotein conducting channel. Has a central role in coupling the hydrolysis of ATP to the transfer of proteins into and across the cell membrane, serving as an ATP-driven molecular motor driving the stepwise translocation of polypeptide chains across the membrane. The sequence is that of Protein translocase subunit SecA from Phocaeicola vulgatus (strain ATCC 8482 / DSM 1447 / JCM 5826 / CCUG 4940 / NBRC 14291 / NCTC 11154) (Bacteroides vulgatus).